Here is a 454-residue protein sequence, read N- to C-terminus: tRNA modification GTPase MnmE (454 aa).

3 residues coordinate (6S)-5-formyl-5,6,7,8-tetrahydrofolate: Arg23, Glu80, and Lys120. One can recognise a TrmE-type G domain in the interval Gly216 to Gly377. K(+) is bound at residue Asn226. GTP is bound by residues Asn226–Ser231, Thr245–Thr251, Asp270–Gly273, and Asn335–Asp338. Ser230 contributes to the Mg(2+) binding site. The K(+) site is built by Thr245, Ile247, and Thr250. Mg(2+) is bound at residue Thr251. Lys454 contacts (6S)-5-formyl-5,6,7,8-tetrahydrofolate.

This sequence belongs to the TRAFAC class TrmE-Era-EngA-EngB-Septin-like GTPase superfamily. TrmE GTPase family. Homodimer. Heterotetramer of two MnmE and two MnmG subunits. K(+) serves as cofactor.

It is found in the cytoplasm. Functionally, exhibits a very high intrinsic GTPase hydrolysis rate. Involved in the addition of a carboxymethylaminomethyl (cmnm) group at the wobble position (U34) of certain tRNAs, forming tRNA-cmnm(5)s(2)U34. This chain is tRNA modification GTPase MnmE, found in Escherichia coli O157:H7.